A 143-amino-acid chain; its full sequence is Transcriptional regulator MraZ (143 aa).

2 SpoVT-AbrB domains span residues threonine 6–glutamate 49 and serine 78–valine 121.

The protein belongs to the MraZ family. Forms oligomers.

Its subcellular location is the cytoplasm. The protein localises to the nucleoid. The protein is Transcriptional regulator MraZ of Spiroplasma kunkelii.